The following is a 109-amino-acid chain: SRA stem-loop-interacting RNA-binding protein, mitochondrial (109 aa).

Ser15 is modified (phosphoserine). The region spanning 19-103 (PVAFVRRIPW…RRPKLPQTSD (85 aa)) is the RRM domain. Thr101 carries the post-translational modification Phosphothreonine. The residue at position 102 (Ser102) is a Phosphoserine.

Ubiquitously expressed, with highest level in heart, liver, skeletal muscle and testis.

The protein localises to the mitochondrion. It is found in the nucleus. Functionally, RNA-binding protein that acts as a nuclear receptor corepressor. Probably acts by binding the SRA RNA, and repressing the SRA-mediated nuclear receptor coactivation. Binds the STR7 loop of SRA RNA. Also able to repress glucocorticoid (GR), androgen (AR), thyroid (TR) and VDR-mediated transactivation. This is SRA stem-loop-interacting RNA-binding protein, mitochondrial (SLIRP) from Homo sapiens (Human).